A 266-amino-acid polypeptide reads, in one-letter code: Cytochrome c oxidase subunit 2 (266 aa).

Over 1-43 (MTITNYINNQFTFLDMAEPWQLGFQDPATPVMEGIINFHHDLM) the chain is Mitochondrial intermembrane. The helical transmembrane segment at 44-64 (FFLISIVVFVCWMLFRVITLF) threads the bilayer. At 65 to 82 (DEKKNKIPATVVHGATIE) the chain is on the mitochondrial matrix side. The helical transmembrane segment at 83–103 (IIWTSIPALILLTVAVPSFAL) threads the bilayer. Residues 104 to 266 (LYSMDEVIDP…NVXLIKFYGI (163 aa)) lie on the Mitochondrial intermembrane side of the membrane. Cu cation contacts are provided by histidine 186, cysteine 221, glutamate 223, cysteine 225, histidine 229, and methionine 232. Position 223 (glutamate 223) interacts with Mg(2+).

This sequence belongs to the cytochrome c oxidase subunit 2 family. As to quaternary structure, component of the cytochrome c oxidase (complex IV, CIV), a multisubunit enzyme composed of a catalytic core of 3 subunits and several supernumerary subunits. The complex exists as a monomer or a dimer and forms supercomplexes (SCs) in the inner mitochondrial membrane with ubiquinol-cytochrome c oxidoreductase (cytochrome b-c1 complex, complex III, CIII). Cu cation serves as cofactor.

It is found in the mitochondrion inner membrane. The catalysed reaction is 4 Fe(II)-[cytochrome c] + O2 + 8 H(+)(in) = 4 Fe(III)-[cytochrome c] + 2 H2O + 4 H(+)(out). Component of the cytochrome c oxidase, the last enzyme in the mitochondrial electron transport chain which drives oxidative phosphorylation. The respiratory chain contains 3 multisubunit complexes succinate dehydrogenase (complex II, CII), ubiquinol-cytochrome c oxidoreductase (cytochrome b-c1 complex, complex III, CIII) and cytochrome c oxidase (complex IV, CIV), that cooperate to transfer electrons derived from NADH and succinate to molecular oxygen, creating an electrochemical gradient over the inner membrane that drives transmembrane transport and the ATP synthase. Cytochrome c oxidase is the component of the respiratory chain that catalyzes the reduction of oxygen to water. Electrons originating from reduced cytochrome c in the intermembrane space (IMS) are transferred via the dinuclear copper A center (CU(A)) of subunit 2 and heme A of subunit 1 to the active site in subunit 1, a binuclear center (BNC) formed by heme A3 and copper B (CU(B)). The BNC reduces molecular oxygen to 2 water molecules using 4 electrons from cytochrome c in the IMS and 4 protons from the mitochondrial matrix. This Phytophthora megasperma (Potato pink rot fungus) protein is Cytochrome c oxidase subunit 2 (COX2).